A 364-amino-acid chain; its full sequence is Aminomethyltransferase (364 aa).

This sequence belongs to the GcvT family. As to quaternary structure, the glycine cleavage system is composed of four proteins: P, T, L and H.

The catalysed reaction is N(6)-[(R)-S(8)-aminomethyldihydrolipoyl]-L-lysyl-[protein] + (6S)-5,6,7,8-tetrahydrofolate = N(6)-[(R)-dihydrolipoyl]-L-lysyl-[protein] + (6R)-5,10-methylene-5,6,7,8-tetrahydrofolate + NH4(+). In terms of biological role, the glycine cleavage system catalyzes the degradation of glycine. In Shigella flexneri, this protein is Aminomethyltransferase.